The chain runs to 138 residues: Transcription antitermination protein NusB (138 aa).

The protein belongs to the NusB family.

In terms of biological role, involved in transcription antitermination. Required for transcription of ribosomal RNA (rRNA) genes. Binds specifically to the boxA antiterminator sequence of the ribosomal RNA (rrn) operons. The protein is Transcription antitermination protein NusB of Coxiella burnetii (strain CbuK_Q154) (Coxiella burnetii (strain Q154)).